Here is a 362-residue protein sequence, read N- to C-terminus: Phospho-N-acetylmuramoyl-pentapeptide-transferase (362 aa).

Transmembrane regions (helical) follow at residues Val-18–Leu-38, Thr-73–Leu-93, Tyr-97–Trp-117, Tyr-134–Thr-154, Leu-160–Leu-180, Gly-200–Ala-220, Ala-237–Phe-257, Val-264–Val-284, Ile-289–Val-309, and Gln-339–Leu-359.

This sequence belongs to the glycosyltransferase 4 family. MraY subfamily. Requires Mg(2+) as cofactor.

Its subcellular location is the cell inner membrane. It catalyses the reaction UDP-N-acetyl-alpha-D-muramoyl-L-alanyl-gamma-D-glutamyl-meso-2,6-diaminopimeloyl-D-alanyl-D-alanine + di-trans,octa-cis-undecaprenyl phosphate = di-trans,octa-cis-undecaprenyl diphospho-N-acetyl-alpha-D-muramoyl-L-alanyl-D-glutamyl-meso-2,6-diaminopimeloyl-D-alanyl-D-alanine + UMP. Its pathway is cell wall biogenesis; peptidoglycan biosynthesis. Its function is as follows. Catalyzes the initial step of the lipid cycle reactions in the biosynthesis of the cell wall peptidoglycan: transfers peptidoglycan precursor phospho-MurNAc-pentapeptide from UDP-MurNAc-pentapeptide onto the lipid carrier undecaprenyl phosphate, yielding undecaprenyl-pyrophosphoryl-MurNAc-pentapeptide, known as lipid I. This Azoarcus sp. (strain BH72) protein is Phospho-N-acetylmuramoyl-pentapeptide-transferase.